We begin with the raw amino-acid sequence, 418 residues long: FXa-directed anticoagulant (418 aa).

A signal peptide spans 1-19 (MNLKIAIIVICQLVYFTQG). Residues asparagine 117, asparagine 167, and asparagine 286 are each glycosylated (N-linked (GlcNAc...) asparagine).

This sequence belongs to the serpin family. Interacts with host coagulation factor X/F10 (activated). In terms of tissue distribution, female salivary gland (at protein level).

It is found in the secreted. Anticoagulant and antithrombotic serpin-type protein inhibiting host coagulation factor Xa (F10). Does not inhibit host uPA/urokinase-type plasminogen activator (PLAU), kallikrein, granzyme B (GZMB), matriptase, elastase, alpha-chymotrypsin, chymase, coagulation factor XIIa (F12), coagulation factor XIa (F11), plasmin (PLG), thrombin (F2), trypsin and cathepsin G (CTSG). Inhibits factor Xa-induced production of pro-inflammatory cytokines, such as MCP-1/CCL2, TNF-alpha/TNF, IL-1beta/IL1B, IL6, IL8/CXCL8 and IL18, in human endothelial cells. Inhibits factor Xa-induced up-regulation of protease-activated receptors (PARs) F2R, F2RL1 and F2RL2 in human endothelial cells. Prevents activation of host F2RL1 via inhibition of F2RL1 cleavage by host factor Xa. Inhibits factor Xa-induced up-regulation of adhesion molecules ICAM1 and VCAM1 in human endothelial cells. Inhibits factor Xa-induced up-regulation of phosphorylated ERK1/2 in human endothelial cells. Inhibits factor Xa-induced activation of transcription factor NF-kappa-B in human endothelial cells. Reduces factor Xa-induced edema in the host. Reduces factor Xa-induced endothelial permeability in the host. The protein is FXa-directed anticoagulant of Aedes albopictus (Asian tiger mosquito).